The chain runs to 267 residues: Nanos homolog 1 (267 aa).

The segment at 40-56 is essential for its translational repressor activity; the sequence is FSSWNDYLGLATLITRA. Positions 57–94 are disordered; the sequence is SDRGSPHEGPGPTAAGPTMGPPEDDEDDDGEEPEAGGR. Acidic residues predominate over residues 78 to 90; that stretch reads PEDDEDDDGEEPE. The Nanos-type zinc finger occupies 188–242; sequence VCVFCRNNKEAVALYTTHILKGPDGRVLCPVLRRYTCPLCGASGDNAHTIKYCPL. Positions 189, 192, 205, 216, 224, 227, 235, and 240 each coordinate Zn(2+). 2 short sequence motifs (C2HC) span residues 189–216 and 224–240; these read CVFC…RVLC and CPLC…IKYC. Residues 243–267 form a disordered region; it reads SKVPPPTVRPPPRSNRDSLPSKKLR. A compositionally biased stretch (pro residues) spans 244-255; sequence KVPPPTVRPPPR. A compositionally biased stretch (basic and acidic residues) spans 256–267; sequence SNRDSLPSKKLR.

The protein belongs to the nanos family. In terms of assembly, interacts with PUM2, SNAPIN and CTNNB1. Interacts (via N-terminal region) with CTNND1. Interacts with DDX20 (via N-terminal region). As to expression, expressed in the oocyte. Transiently expressed in eight-cell embryos. At 12.5 dpc, it is re-expressed in the central nervous system and the expression continues in the adult brain, in which the hippocampal formation is the predominant region. Expressed in the seminiferous tubules of mature testis, but not in the primordial germ cells.

The protein resides in the cytoplasm. Its subcellular location is the perinuclear region. Its function is as follows. May act as a translational repressor which regulates translation of specific mRNAs by forming a complex with PUM2 that associates with the 3'-UTR of mRNA targets. Capable of interfering with the proadhesive and anti-invasive functions of E-cadherin. Up-regulates the production of MMP14 to promote tumor cell invasion. Not essential for normal development. This Mus musculus (Mouse) protein is Nanos homolog 1 (Nanos1).